Consider the following 101-residue polypeptide: Small ribosomal subunit protein bS18c (101 aa).

The protein belongs to the bacterial ribosomal protein bS18 family. As to quaternary structure, part of the 30S ribosomal subunit.

It is found in the plastid. The protein localises to the chloroplast. The polypeptide is Small ribosomal subunit protein bS18c (Panax ginseng (Korean ginseng)).